Here is a 492-residue protein sequence, read N- to C-terminus: 3-octaprenyl-4-hydroxybenzoate carboxy-lyase (492 aa).

Residue asparagine 177 participates in Mn(2+) binding. Prenylated FMN is bound by residues 180–182 (IYR), 194–196 (RWL), and 199–200 (RG). Glutamate 243 is a binding site for Mn(2+). Residue aspartate 292 is the Proton donor of the active site.

The protein belongs to the UbiD family. In terms of assembly, homohexamer. Prenylated FMN serves as cofactor. The cofactor is Mn(2+).

The protein resides in the cell membrane. The enzyme catalyses a 4-hydroxy-3-(all-trans-polyprenyl)benzoate + H(+) = a 2-(all-trans-polyprenyl)phenol + CO2. Its pathway is cofactor biosynthesis; ubiquinone biosynthesis. Its function is as follows. Catalyzes the decarboxylation of 3-octaprenyl-4-hydroxy benzoate to 2-octaprenylphenol, an intermediate step in ubiquinone biosynthesis. The protein is 3-octaprenyl-4-hydroxybenzoate carboxy-lyase of Neisseria gonorrhoeae (strain ATCC 700825 / FA 1090).